Consider the following 379-residue polypeptide: dTDP-3-amino-3,4,6-trideoxy-alpha-D-glucose transaminase (379 aa).

Pyridoxal 5'-phosphate contacts are provided by residues Gly-67, Gln-167, 188–193 (SFYPGK), Tyr-221, Tyr-227, 235–237 (NSR), and Tyr-318. An N6-(pyridoxal phosphate)lysine modification is found at Lys-193.

It belongs to the degT/dnrJ/eryC1 family. As to quaternary structure, homodimer. The cofactor is pyridoxal 5'-phosphate.

It carries out the reaction dTDP-3-amino-3,4,6-trideoxy-alpha-D-glucose + 2-oxoglutarate = dTDP-3-dehydro-4,6-dideoxy-alpha-D-glucose + L-glutamate. It functions in the pathway antibiotic biosynthesis. Its function is as follows. Involved in the biosynthesis of dTDP-alpha-D-desosamine, a sugar found in several bacterial macrolide antibiotics. Catalyzes the reversible transfer of the amino group from L-glutamate to the C-3 position of dTDP-3-keto-4,6-deoxyglucose to yield dTDP-3-amino-3,4,6-trideoxyglucose. The chain is dTDP-3-amino-3,4,6-trideoxy-alpha-D-glucose transaminase from Streptomyces venezuelae.